A 911-amino-acid chain; its full sequence is MGTGTLSSLLLLLLLVTIGDADMKGHFDPAKCRYALGMQDRTIPDSDISVSSSWSDSTAARHSRLESSDGDGAWCPAGPVFPKEEEYLQVDLRRLHLVALVGTQGRHAGGLGKEFSRSYRLRYSRDGRRWMDWKDRWGQEVISGNEDPGGVVLKDLGPPMVARLVRFYPRADRVMSVCLRVELYGCLWRDGLLSYTAPVGQTMQLSEVMVHLNDSTYDGYTAGGLQYGGLGQLADGVVGLDDFRQSQELRVWPGYDYVGWSNQSFPTGYVEMEFEFDRLRTFQTMQVHCNNMHTLGARLPGGVECRFKRGPAMAWEGEPVRHALGGSLGDPRARAISVPLGGHVGRFLQCRFLFAGPWLLFSEISFISDVVNDSSDTFPPAPWWPPGPPPTNFSSLELEPRGQQPVAKAEGSPTAILIGCLVAIILLLLLIIALMLWRLHWRRLLSKAERRVLEEELTVHLSVPGDTILINNRPGPREPPPYQEPRPRGTPPHSAPCVPNGSALLLSNPAYRLLLATYARPPRGPGPPTPAWAKPTNTQACSGDYMEPEKPGAPLLPPPPQNSVPHYAEADIVTLQGVTGGNTYAVPALPPGAVGDGPPRVDFPRSRLRFKEKLGEGQFGEVHLCEVEDPQDLVSSDFPISVHKGHPLLVAVKILRPDATKNARNDFLKEVKIMSRLKDPNIIRLLGVCVQDDPLCMITDYMENGDLNQFLSARQLENKATQGLSGDTESDQGPTISYPMLLHVGAQIASGMRYLATLNFVHRDLATRNCLVGENFTIKIADFGMSRNLYAGDYYRVQGRAVLPIRWMAWECILMGKFTTASDVWAFGVTLWEVLMLCRSQPFGQLTDEQVIENAGEFFRDQGRQVYLSRPPACPQTLYELMLRCWSREPEQRPPFAQLHRFLADDALNTV.

The N-terminal stretch at 1–19 (MGTGTLSSLLLLLLLVTIG) is a signal peptide. The Extracellular portion of the chain corresponds to 22–415 (DMKGHFDPAK…VAKAEGSPTA (394 aa)). Residues 32–186 (CRYALGMQDR…VCLRVELYGC (155 aa)) enclose the F5/8 type C domain. Disulfide bonds link Cys32/Cys186 and Cys75/Cys178. Residues 193–369 (LSYTAPVGQT…LFSEISFISD (177 aa)) are DS-like domain. The Ca(2+) site is built by Asn213, Gln232, Asp235, Val237, Tyr255, and Tyr257. Asn213 is a glycosylation site (N-linked (GlcNAc...) asparagine). A glycan (N-linked (GlcNAc...) asparagine) is linked at Asn262. Cys305 and Cys350 form a disulfide bridge. Residues Ser362 and Glu363 each coordinate Ca(2+). N-linked (GlcNAc...) asparagine glycans are attached at residues Asn372 and Asn392. A helical membrane pass occupies residues 416 to 436 (ILIGCLVAIILLLLLIIALML). The Cytoplasmic segment spans residues 437-911 (WRLHWRRLLS…FLADDALNTV (475 aa)). A disordered region spans residues 468–496 (ILINNRPGPREPPPYQEPRPRGTPPHSAP). The span at 477-494 (REPPPYQEPRPRGTPPHS) shows a compositional bias: pro residues. Residues 479-482 (PPPY) carry the PPxY motif motif. 3 positions are modified to phosphotyrosine; by autocatalysis: Tyr482, Tyr511, and Tyr518. Residues 608-903 (LRFKEKLGEG…PPFAQLHRFL (296 aa)) enclose the Protein kinase domain. Residues 614 to 622 (LGEGQFGEV) and Lys653 each bind ATP. Tyr738 is subject to Phosphotyrosine; by autocatalysis. Asp764 acts as the Proton acceptor in catalysis. A phosphotyrosine; by autocatalysis mark is found at Tyr790, Tyr794, and Tyr795.

Belongs to the protein kinase superfamily. Tyr protein kinase family. Insulin receptor subfamily. As to quaternary structure, homodimer. Interacts (via PPxY motif) with WWC1 (via WW domains) in a collagen-regulated manner. Forms a tripartite complex with WWC1 and PRKCZ, but predominantly in the absence of collagen. Interacts (tyrosine phosphorylated) with SHC1. Interacts with SRC. Interacts with MYH9. Interacts with CDH1. Interacts with PTPN11. Interacts with NCK2. Autophosphorylated in response to fibrillar collagen binding. In terms of tissue distribution, detected in the cochlea and the organ of Corti in the inner ear. Isoform 1 is predominant and is expressed in developing embryo and adult brain. Isoform 2 is expressed in various epithelial cells.

The protein localises to the cell membrane. The catalysed reaction is L-tyrosyl-[protein] + ATP = O-phospho-L-tyrosyl-[protein] + ADP + H(+). Its function is as follows. Tyrosine kinase that functions as a cell surface receptor for fibrillar collagen and regulates cell attachment to the extracellular matrix, remodeling of the extracellular matrix, cell migration, differentiation, survival and cell proliferation. Collagen binding triggers a signaling pathway that involves SRC and leads to the activation of MAP kinases. Regulates remodeling of the extracellular matrix by up-regulation of the matrix metalloproteinases MMP2, MMP7 and MMP9, and thereby facilitates cell migration and wound healing, but also tumor cell invasion. Promotes smooth muscle cell migration, and thereby contributes to arterial wound healing. Phosphorylates PTPN11. Required for normal blastocyst implantation during pregnancy, for normal mammary gland differentiation and normal lactation. Required for normal ear morphology and normal hearing. The sequence is that of Epithelial discoidin domain-containing receptor 1 (Ddr1) from Mus musculus (Mouse).